The following is a 307-amino-acid chain: 4-hydroxybenzoate octaprenyltransferase (307 aa).

Transmembrane regions (helical) follow at residues 19–39 (PVGI…AAMG), 48–68 (VTAG…AILM), 105–125 (AIAA…FLPI), 127–147 (VFYW…MKRY), 150–170 (LPQV…YVAI), 172–192 (GAAD…TVAY), 221–241 (VIII…VMWH), 243–263 (FVPT…AMMF), and 282–302 (FLAN…ACVW).

It belongs to the UbiA prenyltransferase family. Requires Mg(2+) as cofactor.

It is found in the cell inner membrane. The catalysed reaction is all-trans-octaprenyl diphosphate + 4-hydroxybenzoate = 4-hydroxy-3-(all-trans-octaprenyl)benzoate + diphosphate. Its pathway is cofactor biosynthesis; ubiquinone biosynthesis. Its function is as follows. Catalyzes the prenylation of para-hydroxybenzoate (PHB) with an all-trans polyprenyl group. Mediates the second step in the final reaction sequence of ubiquinone-8 (UQ-8) biosynthesis, which is the condensation of the polyisoprenoid side chain with PHB, generating the first membrane-bound Q intermediate 3-octaprenyl-4-hydroxybenzoate. The sequence is that of 4-hydroxybenzoate octaprenyltransferase from Psychrobacter arcticus (strain DSM 17307 / VKM B-2377 / 273-4).